The following is a 218-amino-acid chain: Cytochrome b6 (218 aa).

The helical transmembrane segment at 35-55 (IFYCLGGITLVCFLIQFATGF) threads the bilayer. A heme c-binding site is contributed by cysteine 38. Positions 89 and 103 each coordinate heme b. A run of 3 helical transmembrane segments spans residues 93-113 (ASMMVLMLILHVFRVYLTGGF), 119-139 (LTWVTGVTMAVITVSFGVTGY), and 189-209 (LHTFVMPWLLAVFMLMHFLMI). Residues histidine 190 and histidine 205 each contribute to the heme b site.

Belongs to the cytochrome b family. PetB subfamily. In terms of assembly, the 4 large subunits of the cytochrome b6-f complex are cytochrome b6, subunit IV (17 kDa polypeptide, PetD), cytochrome f and the Rieske protein, while the 4 small subunits are PetG, PetL, PetM and PetN. The complex functions as a dimer. Heme b serves as cofactor. It depends on heme c as a cofactor.

The protein localises to the cellular thylakoid membrane. Component of the cytochrome b6-f complex, which mediates electron transfer between photosystem II (PSII) and photosystem I (PSI), cyclic electron flow around PSI, and state transitions. The sequence is that of Cytochrome b6 from Parasynechococcus marenigrum (strain WH8102).